A 307-amino-acid polypeptide reads, in one-letter code: Estrogen receptor (307 aa).

Positions 1–43 form a DNA-binding region, nuclear receptor; the sequence is GHNDYMCPATNQCTIDKNRRKSCQACRLRKCYEVGMMKGGIRK. The NR C4-type zinc finger occupies 7-31; the sequence is CPATNQCTIDKNRRKSCQACRLRKC. A hinge region spans residues 44 to 95; sequence DRRGGRILKHKRQREEHDNRNAGAIVERRSPNLWPSPLMITHNKKNSPALSL. The 212-residue stretch at 96 to 307 folds into the NR LBD domain; sequence TADQIVSALL…HFRHMSNKGM (212 aa).

Belongs to the nuclear hormone receptor family. NR3 subfamily. Binds DNA as a homodimer. Can form a heterodimer with ER-beta.

It localises to the nucleus. Functionally, the steroid hormones and their receptors are involved in the regulation of eukaryotic gene expression and affect cellular proliferation and differentiation in target tissues. The sequence is that of Estrogen receptor (ESR1) from Aspidoscelis uniparens (Desert grassland whiptail lizard).